The following is a 718-amino-acid chain: Adhesin-like cell surface protein MAD1 (718 aa).

Residues 1–19 (MKGAIQFLGALAAVQAVSA) form the signal peptide. 9 consecutive repeat copies span residues 217–243 (PCTEYSCTATDTTTEPAPTEPAPTEPA), 244–265 (PCTEYSCTATDTTTEPAPTEPA), 266–282 (PCTEYSCTATDTTTEPA), 283–309 (PCTEYSCTATDTTTEPAPTEPAPTEPA), 310–336 (PCTEYSCTATDTTTEPAPTEPAPTEPA), 337–358 (PCTEYSCTATDTTTEPAPTEPA), 359–382 (PCTEYSCTATETTSEAVPTTTDEA), 383–402 (PCTDYSCTATEAVPTTTDEA), and 403–420 (PCTEYSCTGVPTSEAVPT). The tract at residues 452–472 (TSIPYETPSPSETETLPPSGT) is disordered. A CFEM domain is found at 462-575 (SETETLPPSG…VTLPPVTTGA (114 aa)). Cystine bridges form between cysteine 494/cysteine 526, cysteine 504/cysteine 512, and cysteine 514/cysteine 548. Aspartate 509 lines the heme pocket. Glycine 693 carries GPI-anchor amidated glycine lipidation. The propeptide at 694 to 718 (AASSFKAFSTVMLAGVIGLTALIMA) is removed in mature form.

This sequence belongs to the RBT5 family. The GPI-anchor is attached to the protein in the endoplasmic reticulum and serves to target the protein to the cell surface. There, the glucosamine-inositol phospholipid moiety is cleaved off and the GPI-modified mannoprotein is covalently attached via its lipidless GPI glycan remnant to the 1,6-beta-glucan of the outer cell wall layer.

It is found in the secreted. It localises to the cell wall. Its subcellular location is the cell membrane. Cell surface adhesion protein that plays a key role in switching between the saprophytic lifestyle and the predacious lifestyle (nematode trapping). Likely functions to prevent energy-consuming trap formation in the absence of nematodes, and keeps the fungus in the saprophytic life style. May influence the induction signal of trap formation by limiting the porosity of the cell wall and thus affecting its permeability of nitrogen source. This Arthrobotrys oligospora (strain ATCC 24927 / CBS 115.81 / DSM 1491) (Nematode-trapping fungus) protein is Adhesin-like cell surface protein MAD1.